Here is a 171-residue protein sequence, read N- to C-terminus: Adenine phosphoribosyltransferase (171 aa).

The protein belongs to the purine/pyrimidine phosphoribosyltransferase family. In terms of assembly, homodimer.

It localises to the cytoplasm. The catalysed reaction is AMP + diphosphate = 5-phospho-alpha-D-ribose 1-diphosphate + adenine. It functions in the pathway purine metabolism; AMP biosynthesis via salvage pathway; AMP from adenine: step 1/1. Catalyzes a salvage reaction resulting in the formation of AMP, that is energically less costly than de novo synthesis. The protein is Adenine phosphoribosyltransferase of Syntrophotalea carbinolica (strain DSM 2380 / NBRC 103641 / GraBd1) (Pelobacter carbinolicus).